The following is a 251-amino-acid chain: Imidazole glycerol phosphate synthase subunit HisF (251 aa).

Active-site residues include aspartate 11 and aspartate 130.

Belongs to the HisA/HisF family. In terms of assembly, heterodimer of HisH and HisF.

It is found in the cytoplasm. The enzyme catalyses 5-[(5-phospho-1-deoxy-D-ribulos-1-ylimino)methylamino]-1-(5-phospho-beta-D-ribosyl)imidazole-4-carboxamide + L-glutamine = D-erythro-1-(imidazol-4-yl)glycerol 3-phosphate + 5-amino-1-(5-phospho-beta-D-ribosyl)imidazole-4-carboxamide + L-glutamate + H(+). It functions in the pathway amino-acid biosynthesis; L-histidine biosynthesis; L-histidine from 5-phospho-alpha-D-ribose 1-diphosphate: step 5/9. IGPS catalyzes the conversion of PRFAR and glutamine to IGP, AICAR and glutamate. The HisF subunit catalyzes the cyclization activity that produces IGP and AICAR from PRFAR using the ammonia provided by the HisH subunit. The protein is Imidazole glycerol phosphate synthase subunit HisF of Listeria welshimeri serovar 6b (strain ATCC 35897 / DSM 20650 / CCUG 15529 / CIP 8149 / NCTC 11857 / SLCC 5334 / V8).